The sequence spans 113 residues: Protein USP1 (113 aa).

The signal sequence occupies residues 1-18 (MKITMLFAALSAASGAFA). 6 repeat units span residues 32–37 (IGAGVG), 40–45 (IGAGVG), 46–49 (PYGY), 50–53 (PYGA), 59–65 (LQLLPLR), and 69–75 (LQWIPLR). The tract at residues 32–45 (IGAGVGIGIGAGVG) is 2 X 6 AA repeats. Positions 46 to 53 (PYGYPYGA) are 2 X 4 AA approximate tandem repeats. Residues 59-75 (LQLLPLRWLSLQWIPLR) form a 2 X 7 AA approximate repeats region.

The protein resides in the secreted. In Puccinia graminis (Black stem rust fungus), this protein is Protein USP1 (USP1).